We begin with the raw amino-acid sequence, 203 residues long: E3 ubiquitin-protein ligase RNF152 (203 aa).

The RING-type zinc finger occupies 12–55; sequence CQICFNYYSPRRRPKLLDCKHTCCSVCLQQMRTSQKDVRCPWCR. Residues 106–165 form a necessary for interaction with RRAGA region; sequence ISKERALLPGDMGCRLLPGSQQKSVTVVTVPAEQRPLQGGAPQEAVEEEPDRRGVAKSST. A helical membrane pass occupies residues 167-187; sequence SGVCTVILVACVLVFLLGIVL.

Belongs to the RNF152 family. Interacts with RRAGA (inactive GDP-bound form); stimulated by amino acid starvation. Ubiquitinated. Autoubiquitinated in vitro, leading to its degradation by the proteasome.

The protein resides in the lysosome membrane. The enzyme catalyses S-ubiquitinyl-[E2 ubiquitin-conjugating enzyme]-L-cysteine + [acceptor protein]-L-lysine = [E2 ubiquitin-conjugating enzyme]-L-cysteine + N(6)-ubiquitinyl-[acceptor protein]-L-lysine.. It participates in protein modification; protein ubiquitination. In terms of biological role, E3 ubiquitin-protein ligase that acts as a negative regulator of mTORC1 signaling by mediating ubiquitination of RagA/RRAGA and RHEB. Catalyzes 'Lys-63'-linked polyubiquitination of RagA/RRAGA in response to amino acid starvation, thereby regulating mTORC1 signaling. Also mediates monoubiquitination of RHEB, promoting its association with the TSC-TBC complex and subsequent inhibition. Also mediates 'Lys-48'-linked polyubiquitination of target proteins and their subsequent targeting to the proteasome for degradation. Induces apoptosis when overexpressed. The polypeptide is E3 ubiquitin-protein ligase RNF152 (Ailuropoda melanoleuca (Giant panda)).